The sequence spans 359 residues: S-geranylgeranyl-glutathione receptor P2RY8 (359 aa).

At 1–19 (MQVPNSTGPDNATLQMLRN) the chain is on the extracellular side. 2 N-linked (GlcNAc...) asparagine glycosylation sites follow: Asn-5 and Asn-11. Residues 20-40 (PAIAVALPVVYSLVAAVSIPG) form a helical membrane-spanning segment. Residues 41–57 (NLFSLWVLCRRMGPRSP) lie on the Cytoplasmic side of the membrane. The chain crosses the membrane as a helical span at residues 58–78 (SVIFMINLSVTDLMLASVLPF). The Extracellular segment spans residues 79 to 88 (QIYYHCNRHH). A helical membrane pass occupies residues 89–109 (WVFGVLLCNVVTVAFYANMYS). Topologically, residues 110–138 (SILTMTCISVERFLGVLYPLSSKRWRRRR) are cytoplasmic. The chain crosses the membrane as a helical span at residues 139 to 159 (YAVAACAGTWLLLLTALSPLA). Residues 160 to 187 (RTDLTYPVHALGIITCFDVLKWTMLPSV) are Extracellular-facing. The helical transmembrane segment at 188-208 (AMWAVFLFTIFILLFLIPFVI) threads the bilayer. Topologically, residues 209–237 (TVACYTATILKLLRTEEAHGREQRRRAVG) are cytoplasmic. Residues 238 to 258 (LAAVVLLAFVTCFAPNNFVLL) form a helical membrane-spanning segment. The Extracellular segment spans residues 259–275 (AHIVSRLFYGKSYYHVY). The helical transmembrane segment at 276 to 296 (KLTLCLSCLNNCLDPFVYYFA) threads the bilayer. At 297-359 (SREFQLRLRE…PGLQRQESVF (63 aa)) the chain is on the cytoplasmic side. Residues 329–359 (RTTSVRSEAGAHPEGMEGATRPGLQRQESVF) form a disordered region.

The protein belongs to the G-protein coupled receptor 1 family. In terms of tissue distribution, barely detectable in normal blood leukocytes. Weaker expression was seen in heart, kidney and lung. Not detected in brain. Expressed in B cells and follicular helper T cells in germinal centers (at protein level).

It localises to the cell membrane. G protein-coupled receptor for S-geranylgeranyl-glutathione (GGG), an endogenous metabolite present in lymphoid tissues. Couples the binding of GGG to the activation of GNA13 and downstream repression of AKT activation in lymphocytes defining their positioning and growth within lymphoid organs. In lymphoid follicles, confines B cells and follicular helper T cells in germinal centers (GCs) in response to GGG local gradients established by GGT5 (via GGG catabolism) and ABCC1 (via extracellular transport) with lower concentrations of GGG found in the follicular dendritic cell network region around which germinal centers are formed. In the bone marrow, also in response to GGG gradients established by GGT5 and ABCC1, it restricts chemotactic transmigration of B cells, T cells and NK cells from blood vessels to the bone marrow parenchyma. Contributes to GNA13-dependent pathway that suppresses GC B cell growth. In Homo sapiens (Human), this protein is S-geranylgeranyl-glutathione receptor P2RY8.